Consider the following 382-residue polypeptide: ATP phosphoribosyltransferase regulatory subunit (382 aa).

This sequence belongs to the class-II aminoacyl-tRNA synthetase family. HisZ subfamily. In terms of assembly, heteromultimer composed of HisG and HisZ subunits.

It is found in the cytoplasm. Its pathway is amino-acid biosynthesis; L-histidine biosynthesis; L-histidine from 5-phospho-alpha-D-ribose 1-diphosphate: step 1/9. Functionally, required for the first step of histidine biosynthesis. May allow the feedback regulation of ATP phosphoribosyltransferase activity by histidine. This chain is ATP phosphoribosyltransferase regulatory subunit, found in Burkholderia thailandensis (strain ATCC 700388 / DSM 13276 / CCUG 48851 / CIP 106301 / E264).